We begin with the raw amino-acid sequence, 354 residues long: NADH-quinone oxidoreductase subunit H (354 aa).

The next 8 helical transmembrane spans lie at 23-43, 91-111, 124-144, 162-182, 203-223, 250-270, 291-311, and 330-350; these read LVRA…LILW, YIIA…VVPF, LLYV…AGWA, ISYE…TGSL, ILSW…ISGV, GMAF…ISAM, IPGF…FIWL, and IFIP…VSPW.

It belongs to the complex I subunit 1 family. In terms of assembly, NDH-1 is composed of 14 different subunits. Subunits NuoA, H, J, K, L, M, N constitute the membrane sector of the complex.

It is found in the cell inner membrane. The enzyme catalyses a quinone + NADH + 5 H(+)(in) = a quinol + NAD(+) + 4 H(+)(out). Functionally, NDH-1 shuttles electrons from NADH, via FMN and iron-sulfur (Fe-S) centers, to quinones in the respiratory chain. The immediate electron acceptor for the enzyme in this species is believed to be ubiquinone. Couples the redox reaction to proton translocation (for every two electrons transferred, four hydrogen ions are translocated across the cytoplasmic membrane), and thus conserves the redox energy in a proton gradient. This subunit may bind ubiquinone. The polypeptide is NADH-quinone oxidoreductase subunit H (Ralstonia nicotianae (strain ATCC BAA-1114 / GMI1000) (Ralstonia solanacearum)).